Here is a 110-residue protein sequence, read N- to C-terminus: MQSKASANMVRIAPRKARLVVDLIRGKQIGEALSILAYTNKAATPIVEKVLKSAIANAEHNFDMNIENLVVTEAYVNEGPTLKRFRPRAMGRASRINKRTSHVHIVVSEK.

The protein belongs to the universal ribosomal protein uL22 family. As to quaternary structure, part of the 50S ribosomal subunit.

In terms of biological role, this protein binds specifically to 23S rRNA; its binding is stimulated by other ribosomal proteins, e.g. L4, L17, and L20. It is important during the early stages of 50S assembly. It makes multiple contacts with different domains of the 23S rRNA in the assembled 50S subunit and ribosome. The globular domain of the protein is located near the polypeptide exit tunnel on the outside of the subunit, while an extended beta-hairpin is found that lines the wall of the exit tunnel in the center of the 70S ribosome. In Exiguobacterium sibiricum (strain DSM 17290 / CCUG 55495 / CIP 109462 / JCM 13490 / 255-15), this protein is Large ribosomal subunit protein uL22.